Reading from the N-terminus, the 427-residue chain is 3-isopropylmalate dehydratase large subunit (427 aa).

Cysteine 308, cysteine 368, and cysteine 371 together coordinate [4Fe-4S] cluster.

This sequence belongs to the aconitase/IPM isomerase family. LeuC type 2 subfamily. In terms of assembly, heterodimer of LeuC and LeuD. The cofactor is [4Fe-4S] cluster.

It carries out the reaction (2R,3S)-3-isopropylmalate = (2S)-2-isopropylmalate. It participates in amino-acid biosynthesis; L-leucine biosynthesis; L-leucine from 3-methyl-2-oxobutanoate: step 2/4. Its function is as follows. Catalyzes the isomerization between 2-isopropylmalate and 3-isopropylmalate, via the formation of 2-isopropylmaleate. This chain is 3-isopropylmalate dehydratase large subunit, found in Citrifermentans bemidjiense (strain ATCC BAA-1014 / DSM 16622 / JCM 12645 / Bem) (Geobacter bemidjiensis).